The sequence spans 328 residues: Flagellar motor switch protein FliM (328 aa).

The interaction with unphosphorylated CheY stretch occupies residues 1–45 (MSDVLSQEEINQLIEALMKGELKEEDLLKEEEEKKVKPYDFKRPS).

Belongs to the FliM family. As to quaternary structure, interacts (via N-terminus) with unphosphorylated CheY. Interacts (via central domain) with FliG (via central domain or via central domain and C-terminus).

It localises to the cell inner membrane. Its subcellular location is the bacterial flagellum basal body. Functionally, fliM is one of three proteins (FliG, FliN, FliM) that forms the rotor-mounted switch complex (C ring), located at the base of the basal body. This complex interacts with the CheY and CheX chemotaxis proteins, in addition to contacting components of the motor that determine the direction of flagellar rotation. The polypeptide is Flagellar motor switch protein FliM (Thermotoga maritima (strain ATCC 43589 / DSM 3109 / JCM 10099 / NBRC 100826 / MSB8)).